Here is a 920-residue protein sequence, read N- to C-terminus: Plasma membrane ATPase (920 aa).

The segment at methionine 1–glutamate 77 is disordered. The Cytoplasmic segment spans residues methionine 1 to lysine 115. A compositionally biased stretch (acidic residues) spans glutamate 38–aspartate 51. A helical transmembrane segment spans residues phenylalanine 116 to leucine 138. Over glutamate 139–aspartate 140 the chain is Extracellular. Residues tryptophan 141–valine 160 form a helical membrane-spanning segment. At glutamine 161–asparagine 291 the chain is on the cytoplasmic side. Residues glycine 292–tyrosine 314 traverse the membrane as a helical segment. Over arginine 315–glutamine 321 the chain is Extracellular. A helical membrane pass occupies residues isoleucine 322–alanine 354. The Cytoplasmic portion of the chain corresponds to lysine 355–arginine 687. The active-site 4-aspartylphosphate intermediate is aspartate 378. Positions 634 and 638 each coordinate Mg(2+). The helical transmembrane segment at methionine 688–leucine 713 threads the bilayer. Residues asparagine 714–glutamate 720 are Extracellular-facing. The chain crosses the membrane as a helical span at residues leucine 721–tyrosine 738. Residues aspartate 739–lysine 754 lie on the Cytoplasmic side of the membrane. The chain crosses the membrane as a helical span at residues leucine 755–alanine 779. Over glutamine 780 to asparagine 806 the chain is Extracellular. 2 consecutive transmembrane segments (helical) span residues tryptophan 807 to glutamine 826 and leucine 827 to phenylalanine 847. Over glutamate 848–serine 853 the chain is Extracellular. The chain crosses the membrane as a helical span at residues isoleucine 854–leucine 878. Residues glutamine 879–glutamine 920 are Cytoplasmic-facing.

This sequence belongs to the cation transport ATPase (P-type) (TC 3.A.3) family. Type IIIA subfamily.

It localises to the cell membrane. It carries out the reaction ATP + H2O + H(+)(in) = ADP + phosphate + 2 H(+)(out). The plasma membrane ATPase of plants and fungi is a hydrogen ion pump. The proton gradient it generates drives the active transport of nutrients by H(+)-symport. The resulting external acidification and/or internal alkinization may mediate growth responses. The protein is Plasma membrane ATPase (pma-1) of Neurospora crassa (strain ATCC 24698 / 74-OR23-1A / CBS 708.71 / DSM 1257 / FGSC 987).